The following is a 515-amino-acid chain: Maturase K (515 aa).

It belongs to the intron maturase 2 family. MatK subfamily.

It localises to the plastid. The protein resides in the chloroplast. Functionally, usually encoded in the trnK tRNA gene intron. Probably assists in splicing its own and other chloroplast group II introns. The chain is Maturase K from Trillium pusillum (Dwarf wakerobin).